The sequence spans 143 residues: MAPKKKVSALLKLQIQAGKANPAPPLGPALGSHGVNIMDFCKQYNAATQDKMGQVIPVEITVYEDRSFTFILKTPPAAALLKKAAGIQKGTENPLTHKVGSVTKAQVREIAEIKMADLSARDVEAGMKIIAGTARSMGITVTD.

The protein belongs to the universal ribosomal protein uL11 family. Part of the ribosomal stalk of the 50S ribosomal subunit. Interacts with L10 and the large rRNA to form the base of the stalk. L10 forms an elongated spine to which L12 dimers bind in a sequential fashion forming a multimeric L10(L12)X complex. In terms of processing, one or more lysine residues are methylated.

Its function is as follows. Forms part of the ribosomal stalk which helps the ribosome interact with GTP-bound translation factors. This Bifidobacterium adolescentis (strain ATCC 15703 / DSM 20083 / NCTC 11814 / E194a) protein is Large ribosomal subunit protein uL11.